Here is a 217-residue protein sequence, read N- to C-terminus: Small ribosomal subunit protein uS3 (217 aa).

One can recognise a KH type-2 domain in the interval Ile-38–Lys-106.

Belongs to the universal ribosomal protein uS3 family. As to quaternary structure, part of the 30S ribosomal subunit. Forms a tight complex with proteins S10 and S14.

Its function is as follows. Binds the lower part of the 30S subunit head. Binds mRNA in the 70S ribosome, positioning it for translation. The polypeptide is Small ribosomal subunit protein uS3 (Staphylococcus epidermidis (strain ATCC 35984 / DSM 28319 / BCRC 17069 / CCUG 31568 / BM 3577 / RP62A)).